A 379-amino-acid polypeptide reads, in one-letter code: Homoserine O-succinyltransferase (379 aa).

One can recognise an AB hydrolase-1 domain in the interval 51-360; it reads NAVLICHALS…DAPQGHDAFL (310 aa). S157 acts as the Nucleophile in catalysis. R227 contributes to the substrate binding site. Catalysis depends on residues D323 and H356. Position 357 (D357) interacts with substrate.

It belongs to the AB hydrolase superfamily. MetX family. As to quaternary structure, homodimer.

It is found in the cytoplasm. It catalyses the reaction L-homoserine + succinyl-CoA = O-succinyl-L-homoserine + CoA. The protein operates within amino-acid biosynthesis; L-methionine biosynthesis via de novo pathway; O-succinyl-L-homoserine from L-homoserine: step 1/1. Functionally, transfers a succinyl group from succinyl-CoA to L-homoserine, forming succinyl-L-homoserine. The sequence is that of Homoserine O-succinyltransferase from Pseudomonas paraeruginosa (strain DSM 24068 / PA7) (Pseudomonas aeruginosa (strain PA7)).